Reading from the N-terminus, the 250-residue chain is Probable 2' cyclic ADP-D-ribose synthase TcpB (250 aa).

The segment at 1 to 46 (MSKEKQAQSKAHKAQQAISSAKSLSTQKSKMSELERATRDGAAIGK) is disordered. Residues 1–117 (MSKEKQAQSK…TASATMEAEE (117 aa)) form a necessary and sufficient for phosphoinositide binding region. The segment covering 14–23 (AQQAISSAKS) has biased composition (low complexity). Residues 30–39 (KMSELERATR) show a composition bias toward basic and acidic residues. One can recognise a TIR domain in the interval 117–250 (EEYDFFISHA…EIAKELHSLI (134 aa)). E192 is a catalytic residue.

Homodimer; may also form oligomers. Interacts with host TIRAP. Interacts with host MYD88. Interaction with host MYD88 was not confirmed by another study. Interacts with host TLR4. Abolishes the interaction of host TIRAP with TLR4.

Its subcellular location is the secreted. The protein resides in the host cell membrane. It catalyses the reaction NAD(+) + H2O = ADP-D-ribose + nicotinamide + H(+). The enzyme catalyses NAD(+) = 2'cADPR + nicotinamide + H(+). Virulence factor that interferes with host Toll-like receptor 2 (TLR2) and TLR4 signaling, resulting in the reduction of dendritic cell maturation, inhibition of pro-inflammatory cytokine secretion and impaired NF-kappa-B activation in macrophages. Interferes with host TLR4 signaling by abolishing host TLR4-TIRAP interaction (but not host TIRAP-MYD88 interaction) and its downstream signaling. Inhibits host TLR 2 induced NF-kappa-B activation and TNF (tumor necrosis factor) secretion. Binds phosphoinositide (PtdIns) via its N-terminal domain. Has NAD(+) hydrolase (NADase) activity, catalyzes cleavage of NAD(+) into ADP-D-ribose (ADPR) and nicotinamide. Also generates a cyclization variant of cyclic ADPR (cADPR), termed v-cADPR (probably 2'cADPR). The protein is Probable 2' cyclic ADP-D-ribose synthase TcpB of Brucella melitensis biotype 1 (strain ATCC 23456 / CCUG 17765 / NCTC 10094 / 16M).